The chain runs to 178 residues: Large ribosomal subunit protein uL6 (178 aa).

Belongs to the universal ribosomal protein uL6 family. In terms of assembly, part of the 50S ribosomal subunit.

Functionally, this protein binds to the 23S rRNA, and is important in its secondary structure. It is located near the subunit interface in the base of the L7/L12 stalk, and near the tRNA binding site of the peptidyltransferase center. This is Large ribosomal subunit protein uL6 from Oenococcus oeni (strain ATCC BAA-331 / PSU-1).